A 135-amino-acid chain; its full sequence is Large ribosomal subunit protein bL21 (135 aa).

The segment at 114–135 is disordered; sequence EAEKETPVLDETPAEEVETAAE. Residues 125-135 show a composition bias toward acidic residues; the sequence is TPAEEVETAAE.

It belongs to the bacterial ribosomal protein bL21 family. Part of the 50S ribosomal subunit. Contacts protein L20.

Functionally, this protein binds to 23S rRNA in the presence of protein L20. This is Large ribosomal subunit protein bL21 from Nostoc punctiforme (strain ATCC 29133 / PCC 73102).